Here is a 282-residue protein sequence, read N- to C-terminus: DegV domain-containing protein SPy_0865/M5005_Spy0672 (282 aa).

The region spanning 3–280 (LAVITDSTAT…EGAIAFGVTP (278 aa)) is the DegV domain. 2 residues coordinate hexadecanoate: Thr-61 and Ser-94.

In terms of biological role, may bind long-chain fatty acids, such as palmitate, and may play a role in lipid transport or fatty acid metabolism. In Streptococcus pyogenes serotype M1, this protein is DegV domain-containing protein SPy_0865/M5005_Spy0672.